Reading from the N-terminus, the 147-residue chain is MSFTDKQEALVNSSYEAFKQNLSGYSVFFYTVILEKAPAAKGLFSFLKDSAGVQDSPQLQAHAEKVFGLVRDSASQLRATGGVVLGDAALGAIHIQKGVVDPHFVVVKEALLKTIKEAAGDKWSEELSTAWEVAYDALATEIKKAMS.

The 146-residue stretch at 2–147 (SFTDKQEALV…LATEIKKAMS (146 aa)) folds into the Globin domain. 2 positions are modified to nitrated tyrosine: Y25 and Y30. S45 is a binding site for heme b. S45 carries the post-translational modification Phosphoserine. H62 is a binding site for O2. Positions 65, 94, and 97 each coordinate heme b. Nitrated tyrosine is present on Y135.

The protein belongs to the plant globin family. In terms of assembly, monomer. In terms of processing, nitrated in effective nodules and particularly in hypoxic conditions; this mechanism may play a protective role in the symbiosis by buffering toxic peroxynitrite NO(2)(-). Nitration level decrease during nodule senescence. Post-translationally, phosphorylation at Ser-45 disrupts the molecular environment of its porphyrin ring oxygen binding pocket, thus leading to a reduced oxygen consumption and to the delivery of oxygen O(2) to symbiosomes. As to expression, root nodules.

The protein localises to the cytoplasm. It localises to the cytosol. It is found in the nucleus. Leghemoglobin that reversibly binds oxygen O(2) through a pentacoordinated heme iron. In root nodules, facilitates the diffusion of oxygen to the bacteroids while preventing the bacterial nitrogenase from being inactivated by buffering dioxygen, nitric oxide and carbon monoxide, and promoting the formation of reactive oxygen species (ROS, e.g. H(2)O(2)). This role is essential for symbiotic nitrogen fixation (SNF). This Medicago truncatula (Barrel medic) protein is Leghemoglobin 6.